Consider the following 424-residue polypeptide: Protein CLP1 homolog 5 (424 aa).

Residues glutamate 16, threonine 56, and 124–129 contribute to the ATP site; that span reads DSGKST.

The protein belongs to the Clp1 family. Clp1 subfamily. Forms a complex with cleavage and polyadenylation specificity factor (CPSF) subunits PCFS1, FIPS3 and CPSF30.

The protein resides in the nucleus. Functionally, required for endonucleolytic cleavage during polyadenylation-dependent pre-mRNA 3'-end formation. The protein is Protein CLP1 homolog 5 of Arabidopsis thaliana (Mouse-ear cress).